Here is a 423-residue protein sequence, read N- to C-terminus: Diaminobutyrate--2-oxoglutarate transaminase (423 aa).

Position 271 is an N6-(pyridoxal phosphate)lysine (Lys-271).

Belongs to the class-III pyridoxal-phosphate-dependent aminotransferase family. Pyridoxal 5'-phosphate serves as cofactor.

It catalyses the reaction L-2,4-diaminobutanoate + 2-oxoglutarate = L-aspartate 4-semialdehyde + L-glutamate. It functions in the pathway amine and polyamine biosynthesis; ectoine biosynthesis; L-ectoine from L-aspartate 4-semialdehyde: step 1/3. Its function is as follows. Catalyzes reversively the conversion of L-aspartate beta-semialdehyde (ASA) to L-2,4-diaminobutyrate (DABA) by transamination with L-glutamate. The polypeptide is Diaminobutyrate--2-oxoglutarate transaminase (ectB) (Streptomyces avermitilis (strain ATCC 31267 / DSM 46492 / JCM 5070 / NBRC 14893 / NCIMB 12804 / NRRL 8165 / MA-4680)).